Here is a 188-residue protein sequence, read N- to C-terminus: MDSSEVVKVKQASIPAPGSILSQPNTEQSPAIVLPFQFEATTFGTAETAAQVSLQTADPITKLTAPYRHAQIVECKAILTPTDLAVSNPLTVYLAWVPANSPATPTQILRVYGGQSFVLGGAISAAKTIEVPLNLDSVNRMLKDSVTYTDTPKLLAYSRAPTNPSKIPTASIQISGRIRLSKPMLIAN.

It belongs to the tymoviruses capsid protein family.

Its subcellular location is the virion. Self-assembles to form a T=3 icosahedral capsid composed of 180 copies of the capsid protein. The capsid encapsulates the single-stranded RNA genome. The protein is Capsid protein of Physalis heterophylla (PhMV).